The primary structure comprises 105 residues: Large ribosomal subunit protein eL30 (105 aa).

This sequence belongs to the eukaryotic ribosomal protein eL30 family.

The protein is Large ribosomal subunit protein eL30 (RPL30) of Trypanosoma brucei brucei.